A 150-amino-acid chain; its full sequence is Small ribosomal subunit protein bS6 (150 aa).

Residues 99–150 are disordered; sequence GPSAMLQKRDRDDRGERGERGFGGGGFGGGRDREDRPRRGRDREEAATEETF. Composition is skewed to basic and acidic residues over residues 105-118 and 128-144; these read QKRD…RGER and GRDR…REEA.

This sequence belongs to the bacterial ribosomal protein bS6 family.

Binds together with bS18 to 16S ribosomal RNA. The chain is Small ribosomal subunit protein bS6 from Azorhizobium caulinodans (strain ATCC 43989 / DSM 5975 / JCM 20966 / LMG 6465 / NBRC 14845 / NCIMB 13405 / ORS 571).